Here is a 714-residue protein sequence, read N- to C-terminus: 2'-5'-oligoadenylate synthase 2 (714 aa).

Glycine 2 carries N-myristoyl glycine lipidation. 2 OAS domain regions span residues 11–336 (KPSE…SWNV) and 344–683 (TPGH…WNVP). Residue serine 397 coordinates ATP. The Mg(2+) site is built by aspartate 409 and aspartate 480. ATP is bound by residues arginine 544 and lysine 547.

This sequence belongs to the 2-5A synthase family. Homodimer. Mg(2+) serves as cofactor. Post-translationally, myristoylation is not essential for its activity. Glycosylated. Glycosylation is essential for its activity.

It is found in the cytoplasm. It localises to the perinuclear region. The catalysed reaction is 3 ATP = 5'-triphosphoadenylyl-(2'-&gt;5')-adenylyl-(2'-&gt;5')-adenosine + 2 diphosphate. With respect to regulation, produced as a latent enzyme which is activated by double stranded RNA (dsRNA) generated during the course of viral infection. The dsRNA activator must be at least 15 nucleotides long, and no modification of the 2'-hydroxyl group is tolerated. ssRNA or dsDNA do not act as activators. Strongly inhibited by copper, iron and zinc ions. Partially inhibited by cobalt and nickel ions. Its function is as follows. Interferon-induced, dsRNA-activated antiviral enzyme which plays a critical role in cellular innate antiviral response. Activated by detection of double stranded RNA (dsRNA): polymerizes higher oligomers of 2'-5'-oligoadenylates (2-5A) from ATP which then bind to the inactive monomeric form of ribonuclease L (RNASEL) leading to its dimerization and subsequent activation. Activation of RNASEL leads to degradation of cellular as well as viral RNA, resulting in the inhibition of protein synthesis, thus terminating viral replication. Can mediate the antiviral effect via the classical RNASEL-dependent pathway or an alternative antiviral pathway independent of RNASEL. In addition, it may also play a role in other cellular processes such as apoptosis, cell growth, differentiation and gene regulation. May act as a negative regulator of lactation, stopping lactation in virally infected mammary gland lobules, thereby preventing transmission of viruses to neonates. Non-infected lobules would not be affected, allowing efficient pup feeding during infection. The protein is 2'-5'-oligoadenylate synthase 2 (OAS2) of Bos taurus (Bovine).